The sequence spans 432 residues: Probable N-acetylmuramoyl-L-alanine amidase AmiB (432 aa).

A signal peptide spans 1 to 20 (MKTKILFFLFFSTFSFSIFA). The region spanning 25–244 (IAIDPGHGGK…IAYMIYEGLV (220 aa)) is the MurNAc-LAA domain. LysM domains lie at 292–335 (IRHI…SIKI) and 385–429 (LYHK…KIKL).

This sequence belongs to the N-acetylmuramoyl-L-alanine amidase 3 family.

The protein resides in the periplasm. The catalysed reaction is Hydrolyzes the link between N-acetylmuramoyl residues and L-amino acid residues in certain cell-wall glycopeptides.. Cell-wall hydrolase involved in septum cleavage during cell division. The polypeptide is Probable N-acetylmuramoyl-L-alanine amidase AmiB (amiB) (Haemophilus influenzae (strain ATCC 51907 / DSM 11121 / KW20 / Rd)).